A 286-amino-acid polypeptide reads, in one-letter code: 4-diphosphocytidyl-2-C-methyl-D-erythritol kinase (286 aa).

The active site involves Lys11. 93–103 (PFGAGLGGGSS) is a binding site for ATP. Asp135 is a catalytic residue.

It belongs to the GHMP kinase family. IspE subfamily.

The catalysed reaction is 4-CDP-2-C-methyl-D-erythritol + ATP = 4-CDP-2-C-methyl-D-erythritol 2-phosphate + ADP + H(+). It participates in isoprenoid biosynthesis; isopentenyl diphosphate biosynthesis via DXP pathway; isopentenyl diphosphate from 1-deoxy-D-xylulose 5-phosphate: step 3/6. Its function is as follows. Catalyzes the phosphorylation of the position 2 hydroxy group of 4-diphosphocytidyl-2C-methyl-D-erythritol. The protein is 4-diphosphocytidyl-2-C-methyl-D-erythritol kinase of Chlorobaculum tepidum (strain ATCC 49652 / DSM 12025 / NBRC 103806 / TLS) (Chlorobium tepidum).